Reading from the N-terminus, the 265-residue chain is Mlc titration factor A (265 aa).

Residues His111, His148, His152, and Glu211 each contribute to the Zn(2+) site.

It belongs to the MtfA family. Interacts with Mlc. The cofactor is Zn(2+).

The protein localises to the cytoplasm. In terms of biological role, involved in the modulation of the activity of the glucose-phosphotransferase system (glucose-PTS). Interacts with the transcriptional repressor Mlc, preventing its interaction with DNA and leading to the modulation of expression of genes regulated by Mlc, including ptsG, which encodes the PTS system glucose-specific EIICB component. Its function is as follows. Shows zinc-dependent metallopeptidase activity. The polypeptide is Mlc titration factor A (Escherichia coli (strain ATCC 8739 / DSM 1576 / NBRC 3972 / NCIMB 8545 / WDCM 00012 / Crooks)).